The chain runs to 255 residues: MLLAFDVGNTNIVMGVFKGKKLLHSFRISTDKNKTYDEYGMLVNQLIGYNGISLTEIDDVIISSVVPPLMNTLQVMSLKYFRTKPIVVGPGIKTGINIKYDNPKEVGADRIVNAVAAYELYGGPVIVIDFGTATTFCAISEKGEYLGGIIAPGLMISADALFQRTAKLPKIDLTKPPTVINRNTVASMQSGIIYGHVGMVDYIVTRMKGEFAPSAYVVATGGFANMIAEESKTIDTVNEMLTLEGLRIIYERNKE.

Asp6–Val13 contacts ATP. Residues Tyr100 and Gly107 to Arg110 each bind substrate. The active-site Proton acceptor is Asp109. Position 129 (Asp129) interacts with K(+). An ATP-binding site is contributed by Thr132. Substrate is bound at residue Thr184.

Belongs to the type III pantothenate kinase family. As to quaternary structure, homodimer. NH4(+) is required as a cofactor. The cofactor is K(+).

It localises to the cytoplasm. It carries out the reaction (R)-pantothenate + ATP = (R)-4'-phosphopantothenate + ADP + H(+). The protein operates within cofactor biosynthesis; coenzyme A biosynthesis; CoA from (R)-pantothenate: step 1/5. Catalyzes the phosphorylation of pantothenate (Pan), the first step in CoA biosynthesis. In Caldanaerobacter subterraneus subsp. tengcongensis (strain DSM 15242 / JCM 11007 / NBRC 100824 / MB4) (Thermoanaerobacter tengcongensis), this protein is Type III pantothenate kinase.